Here is a 208-residue protein sequence, read N- to C-terminus: 28 kDa heat- and acid-stable phosphoprotein homolog (208 aa).

Disordered stretches follow at residues 1–133 (MAGG…VTKK) and 145–208 (LSRR…LGLA). The span at 16 to 44 (FGRDYERSKGKISRDRVYDEEDIIKRNQE) shows a compositional bias: basic and acidic residues. Low complexity-rich tracts occupy residues 52–69 (GSES…NKSK) and 84–100 (RNPN…PTTK). Residues 105–121 (SDSEDDSDKESDSEDEI) are compositionally biased toward acidic residues. Residues 137–206 (INVNAKVELS…EKMAERRRLG (70 aa)) are a coiled coil. Basic and acidic residues-rich tracts occupy residues 145 to 154 (LSRREKEELA) and 162 to 208 (QNEK…LGLA).

The protein belongs to the PDAP1 family.

This chain is 28 kDa heat- and acid-stable phosphoprotein homolog, found in Dictyostelium discoideum (Social amoeba).